The primary structure comprises 1000 residues: Kinesin-like protein CIN8 (1000 aa).

Over residues 1-26 (MPAENQNTGQDRSSNSISKNGNSQVG) the composition is skewed to polar residues. The segment at 1 to 28 (MPAENQNTGQDRSSNSISKNGNSQVGCH) is disordered. The 442-residue stretch at 36–477 (NITVAVRCRG…LEYASKAKNI (442 aa)) folds into the Kinesin motor domain. Position 128–135 (128–135 (GMTSTGKT)) interacts with ATP. The span at 220–242 (ANNTTSNSASSSRSNSRNSSPRS) shows a compositional bias: low complexity. Disordered stretches follow at residues 220 to 248 (ANNTTSNSASSSRSNSRNSSPRSLNDLTP) and 260 to 312 (KSLP…PNDQ). Polar residues predominate over residues 261-276 (SLPNTIKQQYQQQQAV). Low complexity predominate over residues 277 to 301 (NSRNNSSSNSGSTTNNASSNTNTNN). Positions 302 to 312 (GQRSSMAPNDQ) are enriched in polar residues. Coiled-coil stretches lie at residues 518-615 (MSQD…MALH) and 860-904 (ISVM…IKNS). The interval 970–1000 (VISPKKHAIEDENKSSENVDNEGSRKMLKIE) is disordered. Serine 972 carries the post-translational modification Phosphoserine. A compositionally biased stretch (basic and acidic residues) spans 976–1000 (HAIEDENKSSENVDNEGSRKMLKIE).

Belongs to the TRAFAC class myosin-kinesin ATPase superfamily. Kinesin family. BimC subfamily.

It is found in the cytoplasm. Its subcellular location is the cytoskeleton. It localises to the spindle. The protein localises to the mitochondrion. Elongates the mitotic spindle by interacting with spindle microtubules to generate an outward force pushing spindle poles apart. Following spindle assembly, CIN8 and KIP1 apparently act to oppose a force, possibly generated by KAR3, that draws separated poles back together. The protein is Kinesin-like protein CIN8 (CIN8) of Saccharomyces cerevisiae (strain ATCC 204508 / S288c) (Baker's yeast).